Consider the following 429-residue polypeptide: Enolase (429 aa).

Position 163 (Gln-163) interacts with (2R)-2-phosphoglycerate. Catalysis depends on Glu-205, which acts as the Proton donor. Mg(2+) is bound by residues Asp-242, Glu-286, and Asp-313. Residues Lys-338, Arg-367, Ser-368, and Lys-389 each coordinate (2R)-2-phosphoglycerate. Lys-338 serves as the catalytic Proton acceptor.

The protein belongs to the enolase family. Mg(2+) is required as a cofactor.

It is found in the cytoplasm. It localises to the secreted. The protein resides in the cell surface. The enzyme catalyses (2R)-2-phosphoglycerate = phosphoenolpyruvate + H2O. Its pathway is carbohydrate degradation; glycolysis; pyruvate from D-glyceraldehyde 3-phosphate: step 4/5. Functionally, catalyzes the reversible conversion of 2-phosphoglycerate (2-PG) into phosphoenolpyruvate (PEP). It is essential for the degradation of carbohydrates via glycolysis. The polypeptide is Enolase (Citrifermentans bemidjiense (strain ATCC BAA-1014 / DSM 16622 / JCM 12645 / Bem) (Geobacter bemidjiensis)).